The following is a 450-amino-acid chain: Involucrin (450 aa).

Residues 1–19 (MSQQHTLPVTLPPTLSQEL) are compositionally biased toward polar residues. Disordered stretches follow at residues 1 to 43 (MSQQ…LPAP), 77 to 370 (QLQQ…EQLK), and 422 to 450 (PGQV…EPEV). A compositionally biased stretch (basic and acidic residues) spans 86–108 (QEVHLAKHQELQELQEQELHLGK). A compositionally biased stretch (low complexity) spans 120–135 (GKQQQQQESQEQELYL). Basic and acidic residues-rich tracts occupy residues 187–200 (LGKR…ELHL) and 264–281 (QELH…ELHL). Low complexity predominate over residues 295-344 (GEAAAAGVTGAGPAASKAARRATGAGTAPGKAAAAAGATGAGTAATAPAT). The span at 345–370 (AEERQKAESLEQQLEQEKAQREEQLK) shows a compositional bias: basic and acidic residues.

This sequence belongs to the involucrin family. Directly or indirectly cross-linked to cornifelin (CNFN). Substrate of transglutaminase. Specific glutamines or lysines are cross-linked to keratins, desmoplakin and to inter involucrin molecules. As to expression, keratinocytes of epidermis and other stratified squamous epithelia.

Its subcellular location is the cytoplasm. In terms of biological role, part of the insoluble cornified cell envelope (CE) of stratified squamous epithelia. The sequence is that of Involucrin (IVL) from Lemur catta (Ring-tailed lemur).